We begin with the raw amino-acid sequence, 437 residues long: Mitochondrial distribution and morphology protein 12 (437 aa).

The SMP-LTD domain maps to 1-437; that stretch reads MSIDINWRTA…VYPSFWTFLI (437 aa). The segment covering 73-85 has biased composition (acidic residues); the sequence is DDDADTSDVSEDL. Disordered stretches follow at residues 73-101, 187-274, and 354-384; these read DDDA…SELN, SDSG…PPRM, and SEQQ…RQGG. Residues 91–101 are compositionally biased toward basic and acidic residues; sequence SQWDRTHSELN. Polar residues-rich tracts occupy residues 215–240 and 371–381; these read DTSN…NNLN and ADSSAHTSQKR.

The protein belongs to the MDM12 family. Component of the ER-mitochondria encounter structure (ERMES) or MDM complex, composed of mmm1, mdm10, mdm12 and mdm34. A mmm1 homodimer associates with one molecule of mdm12 on each side in a pairwise head-to-tail manner, and the SMP-LTD domains of mmm1 and mdm12 generate a continuous hydrophobic tunnel for phospholipid trafficking.

It is found in the mitochondrion outer membrane. The protein resides in the endoplasmic reticulum membrane. Its function is as follows. Component of the ERMES/MDM complex, which serves as a molecular tether to connect the endoplasmic reticulum (ER) and mitochondria. Components of this complex are involved in the control of mitochondrial shape and protein biogenesis, and function in nonvesicular lipid trafficking between the ER and mitochondria. Mdm12 is required for the interaction of the ER-resident membrane protein mmm1 and the outer mitochondrial membrane-resident beta-barrel protein mdm10. The mdm12-mmm1 subcomplex functions in the major beta-barrel assembly pathway that is responsible for biogenesis of all mitochondrial outer membrane beta-barrel proteins, and acts in a late step after the SAM complex. The mdm10-mdm12-mmm1 subcomplex further acts in the TOM40-specific pathway after the action of the mdm12-mmm1 complex. Essential for establishing and maintaining the structure of mitochondria and maintenance of mtDNA nucleoids. The sequence is that of Mitochondrial distribution and morphology protein 12 from Aspergillus clavatus (strain ATCC 1007 / CBS 513.65 / DSM 816 / NCTC 3887 / NRRL 1 / QM 1276 / 107).